We begin with the raw amino-acid sequence, 646 residues long: Leukotriene A-4 hydrolase homolog (646 aa).

Residues 172–174 (QCQ) and 307–312 (PYGGME) each bind a peptide. Histidine 336 contacts Zn(2+). The Proton acceptor role is filled by glutamate 337. The Zn(2+) site is built by histidine 340 and glutamate 359. Catalysis depends on tyrosine 424, which acts as the Proton donor.

It belongs to the peptidase M1 family. The cofactor is Zn(2+).

The protein resides in the cytoplasm. It localises to the nucleus. The enzyme catalyses leukotriene A4 + H2O = leukotriene B4. It functions in the pathway lipid metabolism; leukotriene B4 biosynthesis. Functionally, aminopeptidase that preferentially cleaves tripeptides. Also has low epoxide hydrolase activity (in vitro). Can hydrolyze an epoxide moiety of LTA(4) to form LTB(4) (in vitro). In Botryotinia fuckeliana (strain B05.10) (Noble rot fungus), this protein is Leukotriene A-4 hydrolase homolog.